Reading from the N-terminus, the 282-residue chain is tRNA (guanine-N(1)-)-methyltransferase (282 aa).

S-adenosyl-L-methionine is bound by residues Gly157 and 177 to 182; that span reads VGDYIL.

It belongs to the RNA methyltransferase TrmD family. As to quaternary structure, homodimer.

The protein resides in the cytoplasm. It catalyses the reaction guanosine(37) in tRNA + S-adenosyl-L-methionine = N(1)-methylguanosine(37) in tRNA + S-adenosyl-L-homocysteine + H(+). Specifically methylates guanosine-37 in various tRNAs. The sequence is that of tRNA (guanine-N(1)-)-methyltransferase from Rickettsia bellii (strain RML369-C).